The following is a 206-amino-acid chain: Large ribosomal subunit protein uL4 (206 aa).

Residues 44-77 (RQGTRAQKDRQTVKHSTKKPWRQKGTGRARAGMT) form a disordered region. Positions 56–70 (VKHSTKKPWRQKGTG) are enriched in basic residues.

This sequence belongs to the universal ribosomal protein uL4 family. Part of the 50S ribosomal subunit.

Functionally, one of the primary rRNA binding proteins, this protein initially binds near the 5'-end of the 23S rRNA. It is important during the early stages of 50S assembly. It makes multiple contacts with different domains of the 23S rRNA in the assembled 50S subunit and ribosome. Forms part of the polypeptide exit tunnel. This Methylibium petroleiphilum (strain ATCC BAA-1232 / LMG 22953 / PM1) protein is Large ribosomal subunit protein uL4.